We begin with the raw amino-acid sequence, 245 residues long: NAD(P)H-quinone oxidoreductase subunit K (245 aa).

[4Fe-4S] cluster-binding residues include Cys58, Cys59, Cys123, and Cys154.

Belongs to the complex I 20 kDa subunit family. NDH-1 can be composed of about 15 different subunits; different subcomplexes with different compositions have been identified which probably have different functions. It depends on [4Fe-4S] cluster as a cofactor.

The protein resides in the cellular thylakoid membrane. It carries out the reaction a plastoquinone + NADH + (n+1) H(+)(in) = a plastoquinol + NAD(+) + n H(+)(out). It catalyses the reaction a plastoquinone + NADPH + (n+1) H(+)(in) = a plastoquinol + NADP(+) + n H(+)(out). Functionally, NDH-1 shuttles electrons from an unknown electron donor, via FMN and iron-sulfur (Fe-S) centers, to quinones in the respiratory and/or the photosynthetic chain. The immediate electron acceptor for the enzyme in this species is believed to be plastoquinone. Couples the redox reaction to proton translocation, and thus conserves the redox energy in a proton gradient. Cyanobacterial NDH-1 also plays a role in inorganic carbon-concentration. The sequence is that of NAD(P)H-quinone oxidoreductase subunit K from Trichormus variabilis (strain ATCC 29413 / PCC 7937) (Anabaena variabilis).